The chain runs to 206 residues: Small ribosomal subunit protein uS4 (206 aa).

Positions 18–46 (NIWGRPKSPVNRREYGPGQHGQRRKQKMS) are disordered. In terms of domain architecture, S4 RNA-binding spans 94 to 154 (RRLDAVVYRA…EKSRQMAALL (61 aa)).

Belongs to the universal ribosomal protein uS4 family. Part of the 30S ribosomal subunit. Contacts protein S5. The interaction surface between S4 and S5 is involved in control of translational fidelity.

Functionally, one of the primary rRNA binding proteins, it binds directly to 16S rRNA where it nucleates assembly of the body of the 30S subunit. Its function is as follows. With S5 and S12 plays an important role in translational accuracy. The sequence is that of Small ribosomal subunit protein uS4 from Dinoroseobacter shibae (strain DSM 16493 / NCIMB 14021 / DFL 12).